Here is a 572-residue protein sequence, read N- to C-terminus: MSLVRTVTIVLFIIAFLQNAAAQKRQQSIVKSRGAVATDDGRCSVIGMRVLREGGNAIDASVAAALCLGVVSPASSGIGGGAFTVVKIAGGKEIAYDSRETAPLRATENMYGGNVDLKKKGALSVGVPGEVAGLFTAWKQHGKLPWKRLVTPAEKLAEGFKISKYLYMQMNATRSDILADKGLSDLFVSNGELKKPGTICHNPKLALTLKLIGEYGPKAFYNGTVGVNLARDIKKSGGIITLKDLQSYRVKIKEPLSADILGYRVLGMPPPSSGGAAMMLVLNILSQYGIPSGVSGPLGVHRLIEALKHAFAVRMNLGDPDFTDVTKVVSDMLSPKFAKDLKSKINDQKTFDPKYYGGMWNQIDDHGTSHLSIIDRERNAVSMTSTINGYFGALMLSPSTGIVLNNEMDDFSIPMKSNGNLDVPPPAPANFIRPGKRPLSSMSPTIVLKDGKVKAAVGASGGANIIAGTTEVYLNHFFLKMDPLSSVLAPRIYHQLIPNRASYENWTTVFNDHFEIPKATRVVLEKKGHVLSPIAGGTIAQFIVQESGENSGGRSELVAVSDPRKGGFPSGY.

Residues 1–22 form the signal peptide; the sequence is MSLVRTVTIVLFIIAFLQNAAA. Arginine 99 lines the L-glutamate pocket. Asparagine 171 and asparagine 222 each carry an N-linked (GlcNAc...) asparagine glycan. The Nucleophile role is filled by threonine 368. Residues threonine 386, asparagine 388, glutamate 407, aspartate 410, 440–441, and 461–462 contribute to the L-glutamate site; these read SS and GG. Asparagine 505 carries an N-linked (GlcNAc...) asparagine glycan. Residues 552–572 form a disordered region; sequence GGRSELVAVSDPRKGGFPSGY.

Belongs to the gamma-glutamyltransferase family. Expressed in embryo, roots and leaves. In mature plants, expression is restricted to vascular tissues of roots, leaves, flowers and siliques.

The protein resides in the secreted. The protein localises to the extracellular space. It localises to the apoplast. The enzyme catalyses an N-terminal (5-L-glutamyl)-[peptide] + an alpha-amino acid = 5-L-glutamyl amino acid + an N-terminal L-alpha-aminoacyl-[peptide]. It carries out the reaction glutathione + H2O = L-cysteinylglycine + L-glutamate. The catalysed reaction is an S-substituted glutathione + H2O = an S-substituted L-cysteinylglycine + L-glutamate. It participates in sulfur metabolism; glutathione metabolism. Its function is as follows. May play a role in preventing oxidative stress by metabolizing extracellular oxidized glutathione (GSSG). This chain is Glutathione hydrolase 1 (GGT1), found in Arabidopsis thaliana (Mouse-ear cress).